Reading from the N-terminus, the 304-residue chain is MVKVEKFIPNAIDRIKEQAKGKTIIALSGGVDSSVCAVLAYQAIKDDLIPIYIDTGLMRKGETERIKEIFADMNLQTIDAKDRFLDALVGIKDPEEKRKVVGETFIRVFEEEAREINAQYLIQGTIYPDRIESDGGIKSHHNVGGLPEHIDFKGIIEPIDDLYKDEVREVAWALDLPEEICERMPFPGPGLSVRIIGEVTEEKVDVVREANAIVEEELLEQFKPWQTFAAVIGKGTGVKGDVRVHGWIIAVRAVGSRDGMTAEALELPWETLMKIESRISGEIASVARVLYDLSPKPPATIEFE.

In terms of domain architecture, GMPS ATP-PPase spans 2 to 183 (VKVEKFIPNA…LDLPEEICER (182 aa)). Residue 28-34 (SGGVDSS) coordinates ATP.

As to quaternary structure, heterodimer composed of a glutamine amidotransferase subunit (A) and a GMP-binding subunit (B).

It carries out the reaction XMP + L-glutamine + ATP + H2O = GMP + L-glutamate + AMP + diphosphate + 2 H(+). The protein operates within purine metabolism; GMP biosynthesis; GMP from XMP (L-Gln route): step 1/1. Its function is as follows. Catalyzes the synthesis of GMP from XMP. The polypeptide is GMP synthase [glutamine-hydrolyzing] subunit B (Methanococcoides burtonii (strain DSM 6242 / NBRC 107633 / OCM 468 / ACE-M)).